Reading from the N-terminus, the 451-residue chain is tRNA modification GTPase MnmE (451 aa).

R23, E80, and K119 together coordinate (6S)-5-formyl-5,6,7,8-tetrahydrofolate. Positions G215–G372 constitute a TrmE-type G domain. K(+) is bound at residue N225. GTP-binding positions include N225–S230, T244–T250, and D269–G272. S229 is a binding site for Mg(2+). K(+)-binding residues include T244, I246, and T249. T250 provides a ligand contact to Mg(2+). A (6S)-5-formyl-5,6,7,8-tetrahydrofolate-binding site is contributed by K451.

It belongs to the TRAFAC class TrmE-Era-EngA-EngB-Septin-like GTPase superfamily. TrmE GTPase family. In terms of assembly, homodimer. Heterotetramer of two MnmE and two MnmG subunits. K(+) is required as a cofactor.

The protein localises to the cytoplasm. Exhibits a very high intrinsic GTPase hydrolysis rate. Involved in the addition of a carboxymethylaminomethyl (cmnm) group at the wobble position (U34) of certain tRNAs, forming tRNA-cmnm(5)s(2)U34. The protein is tRNA modification GTPase MnmE of Nitrosomonas eutropha (strain DSM 101675 / C91 / Nm57).